A 304-amino-acid chain; its full sequence is Acetyl-coenzyme A carboxylase carboxyl transferase subunit beta (304 aa).

Residues 16–42 (SSLPPKNSEGGLAYFDEPSPEQESTRK) are disordered. A CoA carboxyltransferase N-terminal domain is found at 48 to 304 (LWVKCPKCGE…LLRYHQEGAV (257 aa)). Zn(2+) is bound by residues C52, C55, C71, and C74. Residues 52-74 (CPKCGEALFNKDLVENQRVCLTC) form a C4-type zinc finger.

Belongs to the AccD/PCCB family. In terms of assembly, acetyl-CoA carboxylase is a heterohexamer composed of biotin carboxyl carrier protein (AccB), biotin carboxylase (AccC) and two subunits each of ACCase subunit alpha (AccA) and ACCase subunit beta (AccD). Zn(2+) is required as a cofactor.

It is found in the cytoplasm. The catalysed reaction is N(6)-carboxybiotinyl-L-lysyl-[protein] + acetyl-CoA = N(6)-biotinyl-L-lysyl-[protein] + malonyl-CoA. The protein operates within lipid metabolism; malonyl-CoA biosynthesis; malonyl-CoA from acetyl-CoA: step 1/1. Component of the acetyl coenzyme A carboxylase (ACC) complex. Biotin carboxylase (BC) catalyzes the carboxylation of biotin on its carrier protein (BCCP) and then the CO(2) group is transferred by the transcarboxylase to acetyl-CoA to form malonyl-CoA. The protein is Acetyl-coenzyme A carboxylase carboxyl transferase subunit beta of Desulfitobacterium hafniense (strain Y51).